The primary structure comprises 464 residues: MSTAALVEGKIVQCIGAVIDVEFPRDSMPKIYDALILDGSELTLEVQQQLGDGVVRTICLGASDGLRRGLTVKNTAKPISVPVGKPTLGRIMDVLGRPIDEAGPIDSDVTRSIHQKAPAFDELSPSTELLETGIKVIDLICPFAKGGKVGLFGGAGVGKTVNMMELINNIAKEHGGYSVFAGVGERTREGNDFYHEMKDSNVLDKVALVYGQMNEPPGNRLRVALTGLTMAEHFRDEGLDVLFFVDNIYRFTLAGTEVSALLGRMPSAVGYQPTLAEEMGKLQERITSTKKGSITSVQAVYVPADDLTDPSPATTFGHLDATVVLSRDIASLGIYPAVDPLDSTSRQIDPNVIGEEHYSITRRVQQTLQRYKELRDIIAILGMDELSPEDKLSVARARKIQRFLSQPFHVAEVFTGSPGKYVPLKETIRGFKMIVDGECDHLPEQAFYMVGTIDEAFEKAKKIQ.

153–160 provides a ligand contact to ATP; the sequence is GGAGVGKT.

This sequence belongs to the ATPase alpha/beta chains family. In terms of assembly, F-type ATPases have 2 components, CF(1) - the catalytic core - and CF(0) - the membrane proton channel. CF(1) has five subunits: alpha(3), beta(3), gamma(1), delta(1), epsilon(1). CF(0) has three main subunits: a(1), b(2) and c(9-12). The alpha and beta chains form an alternating ring which encloses part of the gamma chain. CF(1) is attached to CF(0) by a central stalk formed by the gamma and epsilon chains, while a peripheral stalk is formed by the delta and b chains.

It localises to the cell inner membrane. It carries out the reaction ATP + H2O + 4 H(+)(in) = ADP + phosphate + 5 H(+)(out). Functionally, produces ATP from ADP in the presence of a proton gradient across the membrane. The catalytic sites are hosted primarily by the beta subunits. This is ATP synthase subunit beta from Burkholderia cenocepacia (strain ATCC BAA-245 / DSM 16553 / LMG 16656 / NCTC 13227 / J2315 / CF5610) (Burkholderia cepacia (strain J2315)).